Reading from the N-terminus, the 394-residue chain is Galactose-3-O-sulfotransferase 2 (394 aa).

The Cytoplasmic segment spans residues M1 to S8. Residues F9 to V29 traverse the membrane as a helical; Signal-anchor for type II membrane protein segment. Residues D30–K394 lie on the Lumenal side of the membrane. Residues N72, N176, N284, and N326 are each glycosylated (N-linked (GlcNAc...) asparagine).

It belongs to the galactose-3-O-sulfotransferase family.

It is found in the golgi apparatus. The protein localises to the golgi stack membrane. It participates in protein modification; carbohydrate sulfation. Its activity is regulated as follows. Strongly inhibited by Cu(2+) and Zn(2+). Transfers a sulfate group to the hydroxyl group at C3 of non-reducing beta-galactosyl residues. Acts both on type 1 (Gal-beta-1,3-GlcNAc) and type 2 (Gal-beta-1,4-GlcNAc) chains with similar efficiency. The chain is Galactose-3-O-sulfotransferase 2 (Gal3st2) from Mus musculus (Mouse).